The chain runs to 182 residues: Adenylate kinase isoenzyme 6 homolog (182 aa).

A disordered region spans residues 1–20; the sequence is MATPETRRRPNILVTGSPGT. ATP-binding residues include Gly19, Gly21, Lys22, Ser23, and Thr24. The NMPbind stretch occupies residues 39 to 62; sequence EVSKEVRENNLQGDFDEQYNCHVL. The tract at residues 116–126 is LID; the sequence is SRGYSEFKIKE. An ATP-binding site is contributed by Arg117.

This sequence belongs to the adenylate kinase family. AK6 subfamily. In terms of assembly, monomer and homodimer. Interacts with small ribosomal subunit protein uS11. Not a structural component of 43S pre-ribosomes, but transiently interacts with them by binding to uS11.

The protein localises to the cytoplasm. The protein resides in the nucleus. The enzyme catalyses AMP + ATP = 2 ADP. The catalysed reaction is ATP + H2O = ADP + phosphate + H(+). In terms of biological role, broad-specificity nucleoside monophosphate (NMP) kinase that catalyzes the reversible transfer of the terminal phosphate group between nucleoside triphosphates and monophosphates. Also has ATPase activity. Involved in the late cytoplasmic maturation steps of the 40S ribosomal particles, specifically 18S rRNA maturation. While NMP activity is not required for ribosome maturation, ATPase activity is. Associates transiently with small ribosomal subunit protein uS11. ATP hydrolysis breaks the interaction with uS11. May temporarily remove uS11 from the ribosome to enable a conformational change of the ribosomal RNA that is needed for the final maturation step of the small ribosomal subunit. Its NMP activity may have a role in nuclear energy homeostasis. AMP and dAMP are the preferred substrates, but CMP and TMP are also good substrates. ATP and dATP are the best phosphate donors. The chain is Adenylate kinase isoenzyme 6 homolog from Caenorhabditis elegans.